Consider the following 644-residue polypeptide: Transcription factor btd (644 aa).

2 disordered regions span residues 16 to 65 (HQAQ…TQQQ) and 101 to 196 (APPS…AGSP). 2 stretches are compositionally biased toward low complexity: residues 101–119 (APPS…SSPL) and 140–196 (ASPN…AGSP). C2H2-type zinc fingers lie at residues 333–357 (HICH…LRWH), 363–385 (FLCL…GRTH), and 391–413 (YACP…KKTH). 2 disordered regions span residues 437–461 (LEKK…QPDT) and 478–537 (TSAG…SSSA). 2 stretches are compositionally biased toward low complexity: residues 499–508 (TTTTSSAAAS) and 521–537 (AIQP…SSSA).

Its subcellular location is the nucleus. Functionally, required for the development of the antennal, intercalary and mandibular segments of the head. In Drosophila melanogaster (Fruit fly), this protein is Transcription factor btd (btd).